A 289-amino-acid polypeptide reads, in one-letter code: Polyamine aminopropyltransferase (289 aa).

The PABS domain maps to 5 to 238 (TVWHETLHDQ…GIMTFAWATD (234 aa)). Gln-33 lines the S-methyl-5'-thioadenosine pocket. Spermidine-binding residues include His-64 and Asp-88. S-methyl-5'-thioadenosine-binding positions include Glu-108 and 140-141 (DG). Asp-158 functions as the Proton acceptor in the catalytic mechanism. 158–161 (DCTD) is a spermidine binding site. Pro-165 is a binding site for S-methyl-5'-thioadenosine.

It belongs to the spermidine/spermine synthase family. As to quaternary structure, homodimer or homotetramer.

It localises to the cytoplasm. It carries out the reaction S-adenosyl 3-(methylsulfanyl)propylamine + putrescine = S-methyl-5'-thioadenosine + spermidine + H(+). It functions in the pathway amine and polyamine biosynthesis; spermidine biosynthesis; spermidine from putrescine: step 1/1. Catalyzes the irreversible transfer of a propylamine group from the amino donor S-adenosylmethioninamine (decarboxy-AdoMet) to putrescine (1,4-diaminobutane) to yield spermidine. The sequence is that of Polyamine aminopropyltransferase from Enterobacter sp. (strain 638).